The primary structure comprises 412 residues: MADSPREGKVARPPDFTQLIDLASEFVGGKILFATDDFFAPAENLLKRDNPSFKEHEYTEFGKWMDGWQTRRKRIPGHDWCVVQLGIQGVIRGFDVDTSYFTGDHAPRVSIQAANFEEDKQPEIPQREVRTGAAATPEEFEAISELKSDDWSCLVPMTELTPGNPASSHNYFPVTSQQRWSHIRLNIFPDGGIARLRVYGTGQKDWTAGDPKEPLDLVTVAYGGACVGFSNAHFGHPNNLIGVGTATSMADGWETARRLDRPPILENDENGILLVPGCEWAVFRLAHPGVITQIEIDTKYFKGNSPESCKVDGCILTTQEEEDMVRQKWDLPGHKWKPLLPVTKLKPDEMHVLDSLTPELQDVITHAKFTITPDGGVSRLRLKGFPSSICLLRPREKPMMRFSVKAGFRANL.

Belongs to the allantoicase family.

Functionally, the function of this enzyme is unclear as allantoicase activity is not known to exist in mammals. This chain is Probable inactive allantoicase (ALLC), found in Bos taurus (Bovine).